A 418-amino-acid polypeptide reads, in one-letter code: Voltage-gated ClC-type chloride channel ClcB (418 aa).

The Cytoplasmic segment spans residues Met1–Arg4. A helical membrane pass occupies residues Leu5 to Ala25. Topologically, residues Met26–Arg53 are periplasmic. Residues Leu54–Phe74 traverse the membrane as a helical segment. Topologically, residues Thr75 to Lys145 are cytoplasmic. A helical transmembrane segment spans residues Leu146–Gly166. Topologically, residues Ser167–Thr177 are periplasmic. A helical transmembrane segment spans residues Met178 to Ile200. Topologically, residues Asn201–Tyr221 are cytoplasmic. A helical membrane pass occupies residues Ala222 to Met242. The Periplasmic portion of the chain corresponds to Asn243–Pro257. A helical membrane pass occupies residues Trp258 to Trp278. Over Gly279–Thr290 the chain is Cytoplasmic. Residues Ala291–Ala311 traverse the membrane as a helical segment. Topologically, residues Ser312–Ser315 are periplasmic. Residues Gly316–Tyr336 form a helical membrane-spanning segment. At Gly337 to Thr351 the chain is on the cytoplasmic side. A helical membrane pass occupies residues Leu352 to Met372. Over Ser373–Glu379 the chain is Periplasmic. The helical transmembrane segment at Met380–Ile400 threads the bilayer. Residues Ser401–Ser418 are Cytoplasmic-facing.

The protein belongs to the chloride channel (TC 2.A.49) family. ClcB subfamily.

Its subcellular location is the cell inner membrane. Probably acts as an electrical shunt for an outwardly-directed proton pump that is linked to amino acid decarboxylation, as part of the extreme acid resistance (XAR) response. In Escherichia coli O157:H7, this protein is Voltage-gated ClC-type chloride channel ClcB (clcB).